The following is a 122-amino-acid chain: uncharacterized protein (122 aa).

Residues 79-90 (NERVTSRVTNSR) show a composition bias toward polar residues. The tract at residues 79 to 122 (NERVTSRVTNSRTESESNGNGNATGNTSSNANSNGNANGIYIRK) is disordered. A compositionally biased stretch (low complexity) spans 94-122 (ESNGNGNATGNTSSNANSNGNANGIYIRK).

This is an uncharacterized protein from Leptolyngbya boryana (Plectonema boryanum).